Here is a 442-residue protein sequence, read N- to C-terminus: Exodeoxyribonuclease 7 large subunit (442 aa).

Belongs to the XseA family. Heterooligomer composed of large and small subunits.

The protein resides in the cytoplasm. The enzyme catalyses Exonucleolytic cleavage in either 5'- to 3'- or 3'- to 5'-direction to yield nucleoside 5'-phosphates.. In terms of biological role, bidirectionally degrades single-stranded DNA into large acid-insoluble oligonucleotides, which are then degraded further into small acid-soluble oligonucleotides. The protein is Exodeoxyribonuclease 7 large subunit of Rickettsia bellii (strain OSU 85-389).